Here is a 205-residue protein sequence, read N- to C-terminus: Cytochrome c biogenesis ATP-binding export protein CcmA 1 (205 aa).

Residues 2-205 (LEARDLYCER…LALTGGEAGL (204 aa)) form the ABC transporter domain. An ATP-binding site is contributed by 34–41 (GGNGAGKT).

It belongs to the ABC transporter superfamily. CcmA exporter (TC 3.A.1.107) family. As to quaternary structure, the complex is composed of two ATP-binding proteins (CcmA) and two transmembrane proteins (CcmB).

The protein localises to the cell inner membrane. The enzyme catalyses heme b(in) + ATP + H2O = heme b(out) + ADP + phosphate + H(+). Functionally, part of the ABC transporter complex CcmAB involved in the biogenesis of c-type cytochromes; once thought to export heme, this seems not to be the case, but its exact role is uncertain. Responsible for energy coupling to the transport system. The sequence is that of Cytochrome c biogenesis ATP-binding export protein CcmA 1 from Salmonella paratyphi A (strain ATCC 9150 / SARB42).